We begin with the raw amino-acid sequence, 290 residues long: Lipoyl synthase (290 aa).

C34, C39, C45, C60, C64, C67, and S273 together coordinate [4Fe-4S] cluster. Residues 46-262 (WNKRHATVMI…KYIAYSKGFL (217 aa)) enclose the Radical SAM core domain.

This sequence belongs to the radical SAM superfamily. Lipoyl synthase family. Requires [4Fe-4S] cluster as cofactor.

It localises to the cytoplasm. The enzyme catalyses [[Fe-S] cluster scaffold protein carrying a second [4Fe-4S](2+) cluster] + N(6)-octanoyl-L-lysyl-[protein] + 2 oxidized [2Fe-2S]-[ferredoxin] + 2 S-adenosyl-L-methionine + 4 H(+) = [[Fe-S] cluster scaffold protein] + N(6)-[(R)-dihydrolipoyl]-L-lysyl-[protein] + 4 Fe(3+) + 2 hydrogen sulfide + 2 5'-deoxyadenosine + 2 L-methionine + 2 reduced [2Fe-2S]-[ferredoxin]. The protein operates within protein modification; protein lipoylation via endogenous pathway; protein N(6)-(lipoyl)lysine from octanoyl-[acyl-carrier-protein]: step 2/2. Its function is as follows. Catalyzes the radical-mediated insertion of two sulfur atoms into the C-6 and C-8 positions of the octanoyl moiety bound to the lipoyl domains of lipoate-dependent enzymes, thereby converting the octanoylated domains into lipoylated derivatives. This chain is Lipoyl synthase, found in Wolbachia pipientis subsp. Culex pipiens (strain wPip).